A 251-amino-acid chain; its full sequence is MGVAFDKCETRPANIDAILSGLDRYNPETTTIFQDYVVQQCEDRTFDCYANLALLKLYQFNPHLLQAETVTNILAKALTVFPSPAFSLCLSLLPAHTQPFPSNTEAQAASQTSDFVESVQKLARLSTLLESAQYAQFWSTLNSDDLYADLTADVAGFEELVRIRIAVEVGKAFREINAEVLEQWLDLRSREALEKFVAEVCSWEVDKSGPNGTVVKVPTNKENEVRSEVKSERVGVEMFGRVIRRGFEQAA.

Positions F46 to E224 constitute a PCI domain.

The protein belongs to the eIF-3 subunit K family. Component of the eukaryotic translation initiation factor 3 (eIF-3) complex.

It localises to the cytoplasm. Functionally, component of the eukaryotic translation initiation factor 3 (eIF-3) complex, which is involved in protein synthesis of a specialized repertoire of mRNAs and, together with other initiation factors, stimulates binding of mRNA and methionyl-tRNAi to the 40S ribosome. The eIF-3 complex specifically targets and initiates translation of a subset of mRNAs involved in cell proliferation. The protein is Eukaryotic translation initiation factor 3 subunit K of Aspergillus oryzae (strain ATCC 42149 / RIB 40) (Yellow koji mold).